A 520-amino-acid polypeptide reads, in one-letter code: uncharacterized protein (520 aa).

The next 9 membrane-spanning stretches (helical) occupy residues 38-58 (VVLIILSFLISFLLIISIPGG), 84-104 (IAIYILAGLAFSFCMSVGIFN), 105-125 (IGISGQMMAGAIFGFLMILKV), 138-158 (IITVLLMVIGSVSVAVVVATL), 167-187 (VVSAIMLNWIVVLISAYLVET), 220-240 (FGWLASLIIAFISVIIVAVVL), 271-291 (FLSFIISGILSGLLATVVYTA), 318-338 (IAIGLIALNNPFRIVIVSVLI), and 355-375 (ASLVLGIMMYFAALYNLMVYF).

It localises to the cell membrane. This is an uncharacterized protein from Mycoplasma genitalium (strain ATCC 33530 / DSM 19775 / NCTC 10195 / G37) (Mycoplasmoides genitalium).